A 121-amino-acid chain; its full sequence is Histone H2B (121 aa).

The tract at residues 1-27 is disordered; the sequence is MAPKKAPAAAEKKVKKAPTTEKKNKKK. Alanine 2 carries the post-translational modification N,N,N-trimethylalanine. 2 positions are modified to N6-acetyllysine: lysine 5 and lysine 41. A Glycyl lysine isopeptide (Lys-Gly) (interchain with G-Cter in ubiquitin) cross-link involves residue lysine 115.

The protein belongs to the histone H2B family. As to quaternary structure, the nucleosome is a histone octamer containing two molecules each of H2A, H2B, H3 and H4 assembled in one H3-H4 heterotetramer and two H2A-H2B heterodimers. The octamer wraps approximately 147 bp of DNA. In terms of processing, monoubiquitination of Lys-115 gives a specific tag for epigenetic transcriptional activation and is also prerequisite for histone H3 'Lys-4' and 'Lys-79' methylation. Post-translationally, acetylation occurs almost exclusively in the MAC.

Its subcellular location is the nucleus. It localises to the chromosome. Core component of nucleosome. Nucleosomes wrap and compact DNA into chromatin, limiting DNA accessibility to the cellular machineries which require DNA as a template. Histones thereby play a central role in transcription regulation, DNA repair, DNA replication and chromosomal stability. DNA accessibility is regulated via a complex set of post-translational modifications of histones, also called histone code, and nucleosome remodeling. The polypeptide is Histone H2B (Tetrahymena pyriformis).